Consider the following 1835-residue polypeptide: Urea amidolyase (1835 aa).

ATP is bound by residues 122 to 129 and Lys747; that span reads GAIIVGKT. The 444-residue stretch at 632–1075 folds into the Biotin carboxylation domain; that stretch reads LFDTVLIANR…STNILNSYQY (444 aa). The region spanning 751 to 948 is the ATP-grasp domain; that stretch reads RQIAQKAGVP…LVEWMIRIAA (198 aa). Ser803 bears the Phosphoserine mark. Glu830 and Asn865 together coordinate ATP. Positions 1754–1832 constitute a Biotinyl-binding domain; sequence DEEEDFPEGA…DSGDIVAVIE (79 aa). An N6-biotinyllysine modification is found at Lys1798.

In terms of assembly, monomer. Biotin is required as a cofactor.

The catalysed reaction is urea + hydrogencarbonate + ATP = urea-1-carboxylate + ADP + phosphate + H(+). It catalyses the reaction urea-1-carboxylate + H2O + 3 H(+) = 2 NH4(+) + 2 CO2. Its pathway is nitrogen metabolism; urea degradation; CO(2) and NH(3) from urea (allophanate route): step 1/2. It participates in nitrogen metabolism; urea degradation; CO(2) and NH(3) from urea (allophanate route): step 2/2. Its function is as follows. Hydrolysis of urea to ammonia and CO(2). In Saccharomyces cerevisiae (strain ATCC 204508 / S288c) (Baker's yeast), this protein is Urea amidolyase (DUR1,2).